Here is a 203-residue protein sequence, read N- to C-terminus: MNMPMTERIRAGKLFTDMCEGLPEKRLRGKTLMYEFNHSHPSEVEKRESLIKEMFATVGENAWVEPPVYFSYGSNIHIGRNFYANFNLTIVDDYTVTIGDNVLIAPNVTLSVTGHPVHHELRKNGEMYSFPITIGNNVWIGSHVVINPGVTIGDNSVIGAGSIVTKDIPPNVVAAGVPCRVIREINDRDKHYYFKDYKVESSV.

Aspartate 17, serine 71, asparagine 85, and aspartate 93 together coordinate substrate. Asparagine 85 serves as a coordination point for acetyl-CoA. Catalysis depends on histidine 115, which acts as the Proton donor/acceptor. Acetyl-CoA-binding positions include serine 142, alanine 160, 165-166 (TK), arginine 180, and arginine 183.

Belongs to the transferase hexapeptide repeat family. Homotrimer. Post-translationally, the N-terminus of this protein is heterogeneous because the initiator methionine is only partially cleaved.

The protein localises to the cytoplasm. The catalysed reaction is a beta-D-galactoside + acetyl-CoA = a 6-acetyl-beta-D-galactoside + CoA. Catalyzes the CoA-dependent transfer of an acetyl group to the 6-O-methyl position of a range of galactosides, glucosides, and lactosides. May assist cellular detoxification by acetylating non-metabolizable pyranosides, thereby preventing their reentry into the cell. This Escherichia coli (strain K12) protein is Galactoside O-acetyltransferase (lacA).